The chain runs to 273 residues: Glutamate 5-kinase (273 aa).

Lys15 provides a ligand contact to ATP. Residues Ser55, Asp142, and Asn158 each coordinate substrate. ATP-binding positions include 178-179 (SD) and 220-226 (TGGMLSK).

The protein belongs to the glutamate 5-kinase family.

The protein localises to the cytoplasm. The enzyme catalyses L-glutamate + ATP = L-glutamyl 5-phosphate + ADP. The protein operates within amino-acid biosynthesis; L-proline biosynthesis; L-glutamate 5-semialdehyde from L-glutamate: step 1/2. Functionally, catalyzes the transfer of a phosphate group to glutamate to form L-glutamate 5-phosphate. The chain is Glutamate 5-kinase from Streptococcus pyogenes serotype M1.